Here is a 316-residue protein sequence, read N- to C-terminus: Probable cell division protein WhiA (316 aa).

The segment at residues 275–309 (TLKELGEMVASGKISKSGINHRLRKLDEIAEQLRT) is a DNA-binding region (H-T-H motif).

Belongs to the WhiA family.

The protein localises to the cytoplasm. It is found in the nucleoid. Its function is as follows. Involved in cell division and chromosome segregation. May influence the activity of FtsZ. Binds DNA, but does not seem to function as a transcription factor. In Bacillus subtilis (strain 168), this protein is Probable cell division protein WhiA.